Here is a 352-residue protein sequence, read N- to C-terminus: Coproporphyrin III ferrochelatase (352 aa).

2 residues coordinate Fe-coproporphyrin III: serine 52 and tyrosine 121. Histidine 178 and glutamate 267 together coordinate Fe(2+).

Belongs to the ferrochelatase family.

It localises to the cytoplasm. The enzyme catalyses Fe-coproporphyrin III + 2 H(+) = coproporphyrin III + Fe(2+). It participates in porphyrin-containing compound metabolism; protoheme biosynthesis. Involved in coproporphyrin-dependent heme b biosynthesis. Catalyzes the insertion of ferrous iron into coproporphyrin III to form Fe-coproporphyrin III. In Propionibacterium freudenreichii subsp. freudenreichii, this protein is Coproporphyrin III ferrochelatase.